A 449-amino-acid chain; its full sequence is MSQHTFVAGTAPGAVPVVGHAWQMMRRPLHFMSSLSAHGDLVKIRIGPTSAYVPCHPELLRQVLTNDRVFDKGGVFYDRARDIAGNGLVTCPYRDHRRQRRLMQSAFQRTQLERYSTAMRAEIDATAARWHDGTVIDAFPELYGMALRTVARTLYSTPVTEELAQRVEQAFDTVLNGLFRQMFLPHSLRRLPTPANLRYRNNLRFLHDTVQDLITEYRRDDTQRDDLLSALLASRDEDGGRLGDTEIHDQVITVMAAGTETVAGTLTWIFHLLSRHPEIEARLYEEIDTVLDGKPPHWDDLPSLSLTDRIITEALRMYPPAWIFTRLTASDVDLAGVRLPEGTTIVFSPSSVQRHSEAYDDASRFDPDRWLPDRTSAVARQAFTAFGTGARKCIGDLFARTEATLALATMLSQWRVTVEPDADVRPVALATVYHPRRLRLRLTARTPGQ.

Residues 251–273 (VITVMAAGTETVAGTLTWIFHLL) traverse the membrane as a helical segment. Cysteine 393 contributes to the heme binding site.

It belongs to the cytochrome P450 family.

The protein resides in the membrane. The enzyme catalyses pentalenene + 4 reduced [2Fe-2S]-[ferredoxin] + 2 O2 + 4 H(+) = pentalen-13-al + 4 oxidized [2Fe-2S]-[ferredoxin] + 3 H2O. It functions in the pathway antibiotic biosynthesis; neopentalenolactone biosynthesis. Its function is as follows. Catalyzes the conversion of pentalenene to pentalen-13-al by stepwise oxidation via pentalen-13-ol, a precursor of neopentalenolactone antibiotic. The protein is Pentalenene oxygenase (ptlI) of Streptomyces avermitilis (strain ATCC 31267 / DSM 46492 / JCM 5070 / NBRC 14893 / NCIMB 12804 / NRRL 8165 / MA-4680).